Here is a 246-residue protein sequence, read N- to C-terminus: CTD nuclear envelope phosphatase 1 homolog (246 aa).

The helical transmembrane segment at 3-23 (TIAQSVFCFLAGFFNFFLLYF) threads the bilayer. Residues 53–220 (LTVKRKILVL…LNLLPFLDAL (168 aa)) enclose the FCP1 homology domain.

It belongs to the dullard family.

Its subcellular location is the membrane. The protein resides in the nucleus envelope. It carries out the reaction O-phospho-L-seryl-[protein] + H2O = L-seryl-[protein] + phosphate. It catalyses the reaction O-phospho-L-threonyl-[protein] + H2O = L-threonyl-[protein] + phosphate. In terms of biological role, serine/threonine protein phosphatase that may dephosphorylate and activate lipin-like phosphatases. Lipins are phosphatidate phosphatases that catalyze the conversion of phosphatidic acid to diacylglycerol and control the metabolism of fatty acids at different levels. May indirectly modulate the lipid composition of nuclear and/or endoplasmic reticulum membranes and be required for proper nuclear membrane morphology and/or dynamics. Contributes to closure of nuclear envelope (NE) holes and prevents excess nuclear membranes after meiosis and mitosis, possibly through spatial regulation of lipin. May limit the production of endoplasmic reticulum (ER) sheets proximal to the NE to prevent the ER membranes that feed into NE openings from invading the nuclear interior and thereby restrict nuclear transport to nuclear pore complexes (NPCs). May also indirectly regulate the production of lipid droplets and triacylglycerol. This chain is CTD nuclear envelope phosphatase 1 homolog (cnep-1), found in Caenorhabditis elegans.